The chain runs to 470 residues: Nuclear receptor subfamily 0 group B member 1 (470 aa).

Tandem repeats lie at residues 1-67 (MAGE…YRCC), 68-133 (FCGK…YRCC), and 134-200 (FCGE…YRCC). Residues 1–253 (MAGENHQWQG…RPVALKSPQV (253 aa)) form a 4 X 67 AA tandem repeats region. 3 consecutive short sequence motifs (LXXLL motif) follow at residues 13 to 17 (LYNML), 80 to 84 (LYSML), and 146 to 150 (LYSLL). The stretch at 201–253 (FCGEDHPQQGSTLYCVPTSTNQAQAAPEERPRAPWWDTSSGALRPVALKSPQV) is one 4; truncated repeat. The NR LBD domain occupies 205–469 (DHPQQGSTLY…DMMLEMLCTK (265 aa)). The AF-2 motif motif lies at 461–466 (MMLEML).

It belongs to the nuclear hormone receptor family. NR0 subfamily. In terms of assembly, homodimer. Interacts with NR5A1, NR5A2, NR0B2 and with COPS2. Interacts with ESRRB; represses ESRRB activity at the GATA6 promoter.

Its subcellular location is the nucleus. It is found in the cytoplasm. Nuclear receptor that lacks a DNA-binding domain and acts as a corepressor that inhibits the transcriptional activity of other nuclear receptors through heterodimeric interactions. Component of a cascade required for the development of the hypothalamic-pituitary-adrenal-gonadal axis. May also have a role in the development of the embryo and in the maintenance of embryonic stem cell pluripotency. This Homo sapiens (Human) protein is Nuclear receptor subfamily 0 group B member 1 (NR0B1).